The chain runs to 149 residues: Protein GR6 (149 aa).

Expressed in fetus (aged from 7 to 8 weeks). Weakly expressed in lymphocytes.

This Homo sapiens (Human) protein is Protein GR6.